A 359-amino-acid polypeptide reads, in one-letter code: Peptide chain release factor 1 (359 aa).

At Gln235 the chain carries N5-methylglutamine.

It belongs to the prokaryotic/mitochondrial release factor family. Post-translationally, methylated by PrmC. Methylation increases the termination efficiency of RF1.

The protein resides in the cytoplasm. Peptide chain release factor 1 directs the termination of translation in response to the peptide chain termination codons UAG and UAA. The polypeptide is Peptide chain release factor 1 (Nitrosomonas eutropha (strain DSM 101675 / C91 / Nm57)).